The sequence spans 548 residues: Eukaryotic translation initiation factor 3 subunit D (548 aa).

An N6-acetyllysine modification is found at K53. A Phosphoserine modification is found at S161. An RNA gate region spans residues 285–299 (DFDLLTVSETANEPP). Residues 523–548 (PDGTFSSDEDDEEEEEEEEEEEEEEA) form a disordered region. Phosphoserine occurs at positions 528 and 529. Acidic residues predominate over residues 529–548 (SDEDDEEEEEEEEEEEEEEA).

Belongs to the eIF-3 subunit D family. In terms of assembly, component of the eukaryotic translation initiation factor 3 (eIF-3) complex, which is composed of 13 subunits: EIF3A, EIF3B, EIF3C, EIF3D, EIF3E, EIF3F, EIF3G, EIF3H, EIF3I, EIF3J, EIF3K, EIF3L and EIF3M. The eIF-3 complex appears to include 3 stable modules: module A is composed of EIF3A, EIF3B, EIF3G and EIF3I; module B is composed of EIF3F, EIF3H, and EIF3M; and module C is composed of EIF3C, EIF3D, EIF3E, EIF3K and EIF3L. EIF3C of module C binds EIF3B of module A and EIF3H of module B, thereby linking the three modules. EIF3J is a labile subunit that binds to the eIF-3 complex via EIF3B. The eIF-3 complex interacts with RPS6KB1 under conditions of nutrient depletion. Mitogenic stimulation leads to binding and activation of a complex composed of MTOR and RPTOR, leading to phosphorylation and release of RPS6KB1 and binding of EIF4B to eIF-3.

It is found in the cytoplasm. In terms of biological role, mRNA cap-binding component of the eukaryotic translation initiation factor 3 (eIF-3) complex, a complex required for several steps in the initiation of protein synthesis of a specialized repertoire of mRNAs. The eIF-3 complex associates with the 40S ribosome and facilitates the recruitment of eIF-1, eIF-1A, eIF-2:GTP:methionyl-tRNAi and eIF-5 to form the 43S pre-initiation complex (43S PIC). The eIF-3 complex stimulates mRNA recruitment to the 43S PIC and scanning of the mRNA for AUG recognition. The eIF-3 complex is also required for disassembly and recycling of post-termination ribosomal complexes and subsequently prevents premature joining of the 40S and 60S ribosomal subunits prior to initiation. The eIF-3 complex specifically targets and initiates translation of a subset of mRNAs involved in cell proliferation, including cell cycling, differentiation and apoptosis, and uses different modes of RNA stem-loop binding to exert either translational activation or repression. In the eIF-3 complex, EIF3D specifically recognizes and binds the 7-methylguanosine cap of a subset of mRNAs. This chain is Eukaryotic translation initiation factor 3 subunit D, found in Bos taurus (Bovine).